A 247-amino-acid chain; its full sequence is 2,3-bisphosphoglycerate-dependent phosphoglycerate mutase (247 aa).

Substrate-binding positions include 8–15 (RHGESVWN), 21–22 (TG), Arg-60, 87–90 (ERHY), Lys-98, 114–115 (RR), and 183–184 (GN). His-9 serves as the catalytic Tele-phosphohistidine intermediate. The active-site Proton donor/acceptor is the Glu-87.

It belongs to the phosphoglycerate mutase family. BPG-dependent PGAM subfamily. Homodimer.

It catalyses the reaction (2R)-2-phosphoglycerate = (2R)-3-phosphoglycerate. It functions in the pathway carbohydrate degradation; glycolysis; pyruvate from D-glyceraldehyde 3-phosphate: step 3/5. Functionally, catalyzes the interconversion of 2-phosphoglycerate and 3-phosphoglycerate. The sequence is that of 2,3-bisphosphoglycerate-dependent phosphoglycerate mutase from Geobacter metallireducens (strain ATCC 53774 / DSM 7210 / GS-15).